Reading from the N-terminus, the 144-residue chain is Snake venom vascular endothelial growth factor toxin VR-1 (144 aa).

Positions 1–24 (MAAYLLAVAILFCIQGWPSGTVQG) are cleaved as a signal peptide. Glutamine 25 is modified (pyrrolidone carboxylic acid). Disulfide bonds link cysteine 38–cysteine 80, cysteine 69–cysteine 115, and cysteine 73–cysteine 117. The span at 120 to 134 (RWKQGEPEGPKEPRR) shows a compositional bias: basic and acidic residues. A disordered region spans residues 120 to 144 (RWKQGEPEGPKEPRRGGVRAKFPFD). Residues 134–144 (RGGVRAKFPFD) constitute a propeptide that is removed on maturation.

It belongs to the PDGF/VEGF growth factor family. Snake venom VEGF subfamily. As to quaternary structure, homodimer; disulfide-linked. Interacts with VEGF receptor-2 (KDR) with high affinity, but not with VEGF receptor-1 (Flt-1), VEGF receptor-3 (FLT4), and neuropilin-1 (NRP1). Expressed by the venom gland.

The protein resides in the secreted. Snake venom VEGFs may contribute to venom dispersion and prey subjugation by inducing vascular permeability and hypotension. This protein induces angiogenesis probably through VEGF receptor (KDR/VEGFR-2) signaling, as well as drastic hypotension. The hypotension is mediated by nitric oxide, which is produced by VEGF-activated endothelium NO synthase. May also induce vascular permeability. This is Snake venom vascular endothelial growth factor toxin VR-1 from Daboia russelii (Russel's viper).